Consider the following 906-residue polypeptide: Protein translocase subunit SecA (906 aa).

Residues Gln86, 104–108 (GEGKT), and Asp511 each bind ATP. The segment covering 852-888 (EHESVIDNNQRHDEDEQEEAPKVKQVRREGPKVKRND) has biased composition (basic and acidic residues). The interval 852 to 906 (EHESVIDNNQRHDEDEQEEAPKVKQVRREGPKVKRNDPCPCGSGKKYKQCHSKVE) is disordered. Positions 890, 892, 901, and 902 each coordinate Zn(2+). Residues 896–906 (KKYKQCHSKVE) are compositionally biased toward basic residues.

It belongs to the SecA family. As to quaternary structure, monomer and homodimer. Part of the essential Sec protein translocation apparatus which comprises SecA, SecYEG and auxiliary proteins SecDF-YajC and YidC. Zn(2+) serves as cofactor.

The protein resides in the cell inner membrane. Its subcellular location is the cytoplasm. The catalysed reaction is ATP + H2O + cellular proteinSide 1 = ADP + phosphate + cellular proteinSide 2.. Its function is as follows. Part of the Sec protein translocase complex. Interacts with the SecYEG preprotein conducting channel. Has a central role in coupling the hydrolysis of ATP to the transfer of proteins into and across the cell membrane, serving both as a receptor for the preprotein-SecB complex and as an ATP-driven molecular motor driving the stepwise translocation of polypeptide chains across the membrane. This Francisella tularensis subsp. tularensis (strain SCHU S4 / Schu 4) protein is Protein translocase subunit SecA.